Reading from the N-terminus, the 775-residue chain is 1,4-alpha-glucan branching enzyme GlgB (775 aa).

Asp431 serves as the catalytic Nucleophile. The active-site Proton donor is the Glu484.

This sequence belongs to the glycosyl hydrolase 13 family. GlgB subfamily. In terms of assembly, monomer.

The enzyme catalyses Transfers a segment of a (1-&gt;4)-alpha-D-glucan chain to a primary hydroxy group in a similar glucan chain.. The protein operates within glycan biosynthesis; glycogen biosynthesis. Functionally, catalyzes the formation of the alpha-1,6-glucosidic linkages in glycogen by scission of a 1,4-alpha-linked oligosaccharide from growing alpha-1,4-glucan chains and the subsequent attachment of the oligosaccharide to the alpha-1,6 position. The chain is 1,4-alpha-glucan branching enzyme GlgB from Parasynechococcus marenigrum (strain WH8102).